A 147-amino-acid polypeptide reads, in one-letter code: Hemoglobin subunit beta-2 (147 aa).

Residues 3-147 (EWTDEERTII…VVSALGRQYH (145 aa)) form the Globin domain. His-64 and His-93 together coordinate heme b.

The protein belongs to the globin family. As to quaternary structure, hb 2 is a heterotetramer of two alpha-2 and two beta-2 chains. Hb 3 is a heterotetramer of two alpha-1 and two beta-2 chains. In terms of tissue distribution, red blood cells.

Functionally, involved in oxygen transport from gills to the various peripheral tissues. This Gadus morhua (Atlantic cod) protein is Hemoglobin subunit beta-2 (hbb2).